We begin with the raw amino-acid sequence, 807 residues long: Glycerol-3-phosphate acyltransferase (807 aa).

The HXXXXD motif motif lies at 305–310 (CHRSHM).

Belongs to the GPAT/DAPAT family.

The protein resides in the cell inner membrane. It catalyses the reaction sn-glycerol 3-phosphate + an acyl-CoA = a 1-acyl-sn-glycero-3-phosphate + CoA. It participates in phospholipid metabolism; CDP-diacylglycerol biosynthesis; CDP-diacylglycerol from sn-glycerol 3-phosphate: step 1/3. This is Glycerol-3-phosphate acyltransferase from Aliivibrio fischeri (strain ATCC 700601 / ES114) (Vibrio fischeri).